The sequence spans 116 residues: Ribosome-binding factor A (116 aa).

This sequence belongs to the RbfA family. As to quaternary structure, monomer. Binds 30S ribosomal subunits, but not 50S ribosomal subunits or 70S ribosomes.

It localises to the cytoplasm. Functionally, one of several proteins that assist in the late maturation steps of the functional core of the 30S ribosomal subunit. Associates with free 30S ribosomal subunits (but not with 30S subunits that are part of 70S ribosomes or polysomes). Required for efficient processing of 16S rRNA. May interact with the 5'-terminal helix region of 16S rRNA. In Ureaplasma parvum serovar 3 (strain ATCC 27815 / 27 / NCTC 11736), this protein is Ribosome-binding factor A.